The primary structure comprises 279 residues: Putative expansin-A26 (279 aa).

The N-terminal stretch at 1-27 (MKLLEKMIYVEFLMIIMAMWVVPMSYG) is a signal peptide. Positions 76–186 (QGACGYGNLF…RRIPCSKTGG (111 aa)) constitute an Expansin-like EG45 domain. In terms of domain architecture, Expansin-like CBD spans 196–275 (YFLMVLIYNV…NWGFGQTFDG (80 aa)).

This sequence belongs to the expansin family. Expansin A subfamily.

Its subcellular location is the secreted. The protein resides in the cell wall. The protein localises to the membrane. Functionally, causes loosening and extension of plant cell walls by disrupting non-covalent bonding between cellulose microfibrils and matrix glucans. No enzymatic activity has been found. The protein is Putative expansin-A26 (EXPA26) of Arabidopsis thaliana (Mouse-ear cress).